The primary structure comprises 75 residues: UPF0154 protein SERP0914 (75 aa).

A helical transmembrane segment spans residues 3 to 23 (IWVAIILIVIALIAGLIGGFL).

The protein belongs to the UPF0154 family.

Its subcellular location is the membrane. The chain is UPF0154 protein SERP0914 from Staphylococcus epidermidis (strain ATCC 35984 / DSM 28319 / BCRC 17069 / CCUG 31568 / BM 3577 / RP62A).